The primary structure comprises 76 residues: MLCLPVFIILLLLASPAAPNPLERRIQSDLIRTALEDADMKTPKGVLSGIMSNLGTVGNMVGGFCCTVYSGCCSEK.

A signal peptide spans 1 to 19 (MLCLPVFIILLLLASPAAP). A propeptide spanning residues 20 to 44 (NPLERRIQSDLIRTALEDADMKTPK) is cleaved from the precursor.

This sequence belongs to the conotoxin T superfamily. Contains 2 disulfide bonds that can be either 'C1-C3, C2-C4' or 'C1-C4, C2-C3', since these disulfide connectivities have been observed for conotoxins with cysteine framework V (for examples, see AC P0DQQ7 and AC P81755). Expressed by the venom duct.

It localises to the secreted. The polypeptide is Conotoxin TsMLCL-03 (Conus tessulatus (Tessellate cone)).